A 581-amino-acid polypeptide reads, in one-letter code: Polypeptide N-acetylgalactosaminyltransferase 12 (581 aa).

The Cytoplasmic portion of the chain corresponds to 1-19; the sequence is MWGRTARRRCPRELRRGRE. Residues 20 to 37 traverse the membrane as a helical; Signal-anchor for type II membrane protein segment; the sequence is ALLVLLALLALAGLGSVL. Residues 38-581 lie on the Lumenal side of the membrane; it reads RAQRGAGAGA…QKWFFKERML (544 aa). The disordered stretch occupies residues 43 to 67; that stretch reads AGAGAAEPGPPRTPRPGRREPVMPR. Intrachain disulfides connect Cys-125–Cys-358, Cys-349–Cys-422, Cys-458–Cys-479, Cys-506–Cys-521, and Cys-547–Cys-566. The interval 135-244 is catalytic subdomain A; that stretch reads LPRTSVIIAF…EGWLEPLLQR (110 aa). Substrate contacts are provided by Asp-176 and Arg-205. Mn(2+)-binding residues include Asp-228 and His-230. A catalytic subdomain B region spans residues 304-366; that stretch reads VIRSPTMAGG…PCSHVGHVFP (63 aa). Trp-335 provides a ligand contact to substrate. His-363 contacts Mn(2+). Tyr-371 lines the substrate pocket. One can recognise a Ricin B-type lectin domain in the interval 445 to 577; the sequence is FFGMLQNKGL…NSDHQKWFFK (133 aa).

It belongs to the glycosyltransferase 2 family. GalNAc-T subfamily. Mn(2+) serves as cofactor. As to expression, widely expressed at different levels of expression. Highly expressed in digestive organs such as small intestine, stomach, pancreas and colon. Expressed at intermediate level in testis, thyroid gland and spleen. Weakly expressed in whole brain, cerebral cortex, cerebellum, fetal brain, bone marrow, thymus, leukocytes, heart, skeletal muscle, liver, lung, esophagus, kidney, adrenal gland, mammary gland, uterus, placenta, ovary and prostate.

It is found in the golgi apparatus membrane. It carries out the reaction L-seryl-[protein] + UDP-N-acetyl-alpha-D-galactosamine = a 3-O-[N-acetyl-alpha-D-galactosaminyl]-L-seryl-[protein] + UDP + H(+). It catalyses the reaction L-threonyl-[protein] + UDP-N-acetyl-alpha-D-galactosamine = a 3-O-[N-acetyl-alpha-D-galactosaminyl]-L-threonyl-[protein] + UDP + H(+). It participates in protein modification; protein glycosylation. Functionally, catalyzes the initial reaction in O-linked oligosaccharide biosynthesis, the transfer of an N-acetyl-D-galactosamine residue to a serine or threonine residue on the protein receptor. Has activity toward non-glycosylated peptides such as Muc5AC, Muc1a and EA2, and no detectable activity with Muc2 and Muc7. Displays enzymatic activity toward the Gal-NAc-Muc5AC glycopeptide, but no detectable activity to mono-GalNAc-glycosylated Muc1a, Muc2, Muc7 and EA2. May play an important role in the initial step of mucin-type oligosaccharide biosynthesis in digestive organs. The sequence is that of Polypeptide N-acetylgalactosaminyltransferase 12 (GALNT12) from Homo sapiens (Human).